Reading from the N-terminus, the 752-residue chain is Zinc finger protein 184 (752 aa).

The region spanning 28–99 (VTFKDVIVDF…EPSIPVGTPG (72 aa)) is the KRAB domain. 3 positions are modified to phosphoserine: Ser117, Ser122, and Ser200. Lys207 is covalently cross-linked (Glycyl lysine isopeptide (Lys-Gly) (interchain with G-Cter in SUMO2)). C2H2-type zinc fingers lie at residues 223–245 (CKCN…QRTH), 251–273 (YKCN…QRIH), 279–301 (YKCD…QRIH), 307–329 (YKCD…QRIH), 335–357 (YTCN…QKIH), 363–385 (FKCD…QKIH), 391–413 (YKCN…HMIH), 419–441 (YECN…QKTH), 447–469 (YDCA…LKIH), 475–497 (YKCN…RRIH), 503–525 (FECS…QKTH), 531–553 (YECK…ERIH), 559–581 (YQCH…RKIH), 587–609 (YKCN…KRIH), 615–637 (YECA…QKTH), 643–665 (YHCN…QRIH), 671–693 (YKCN…QNTH), 699–721 (YNCN…QRIH), and 727–749 (FGCN…QRLH).

It belongs to the krueppel C2H2-type zinc-finger protein family.

It is found in the nucleus. Functionally, may be involved in transcriptional regulation. The protein is Zinc finger protein 184 (ZNF184) of Bos taurus (Bovine).